Consider the following 354-residue polypeptide: UDP-N-acetylglucosamine--N-acetylmuramyl-(pentapeptide) pyrophosphoryl-undecaprenol N-acetylglucosamine transferase (354 aa).

Residues 11–13 (TAG), R164, S194, and Q289 each bind UDP-N-acetyl-alpha-D-glucosamine.

Belongs to the glycosyltransferase 28 family. MurG subfamily.

The protein localises to the cell membrane. The catalysed reaction is di-trans,octa-cis-undecaprenyl diphospho-N-acetyl-alpha-D-muramoyl-L-alanyl-D-glutamyl-meso-2,6-diaminopimeloyl-D-alanyl-D-alanine + UDP-N-acetyl-alpha-D-glucosamine = di-trans,octa-cis-undecaprenyl diphospho-[N-acetyl-alpha-D-glucosaminyl-(1-&gt;4)]-N-acetyl-alpha-D-muramoyl-L-alanyl-D-glutamyl-meso-2,6-diaminopimeloyl-D-alanyl-D-alanine + UDP + H(+). Its pathway is cell wall biogenesis; peptidoglycan biosynthesis. Its function is as follows. Cell wall formation. Catalyzes the transfer of a GlcNAc subunit on undecaprenyl-pyrophosphoryl-MurNAc-pentapeptide (lipid intermediate I) to form undecaprenyl-pyrophosphoryl-MurNAc-(pentapeptide)GlcNAc (lipid intermediate II). The sequence is that of UDP-N-acetylglucosamine--N-acetylmuramyl-(pentapeptide) pyrophosphoryl-undecaprenol N-acetylglucosamine transferase from Clostridium botulinum (strain Kyoto / Type A2).